A 33-amino-acid chain; its full sequence is Photosystem II reaction center protein Psb30 (33 aa).

Residues 5 to 25 (VIAQLASLALIIVLGPLVIGL) traverse the membrane as a helical segment.

It belongs to the Psb30/Ycf12 family. PSII is composed of 1 copy each of membrane proteins PsbA, PsbB, PsbC, PsbD, PsbE, PsbF, PsbH, PsbI, PsbJ, PsbK, PsbL, PsbM, PsbT, PsbX, PsbY, PsbZ, Psb30/Ycf12, peripheral proteins of the oxygen-evolving complex and a large number of cofactors. It forms dimeric complexes.

It localises to the plastid. The protein resides in the chloroplast thylakoid membrane. In terms of biological role, a core subunit of photosystem II (PSII), probably helps stabilize the reaction center. The polypeptide is Photosystem II reaction center protein Psb30 (Chara vulgaris (Common stonewort)).